The chain runs to 103 residues: uncharacterized protein (103 aa).

Its subcellular location is the plastid. It localises to the chloroplast. This is an uncharacterized protein from Auxenochlorella pyrenoidosa (Freshwater green alga).